Consider the following 500-residue polypeptide: L-arabinose isomerase (500 aa).

Mn(2+)-binding residues include glutamate 306, glutamate 333, histidine 350, and histidine 450.

The protein belongs to the arabinose isomerase family. In terms of assembly, homohexamer. Requires Mn(2+) as cofactor.

It carries out the reaction beta-L-arabinopyranose = L-ribulose. It functions in the pathway carbohydrate degradation; L-arabinose degradation via L-ribulose; D-xylulose 5-phosphate from L-arabinose (bacterial route): step 1/3. Functionally, catalyzes the conversion of L-arabinose to L-ribulose. In Escherichia coli O17:K52:H18 (strain UMN026 / ExPEC), this protein is L-arabinose isomerase.